We begin with the raw amino-acid sequence, 89 residues long: Cell division topological specificity factor (89 aa).

The protein belongs to the MinE family.

Its function is as follows. Prevents the cell division inhibition by proteins MinC and MinD at internal division sites while permitting inhibition at polar sites. This ensures cell division at the proper site by restricting the formation of a division septum at the midpoint of the long axis of the cell. This is Cell division topological specificity factor from Sodalis glossinidius (strain morsitans).